The chain runs to 341 residues: Paired box protein Pax-9 (341 aa).

Positions 4 to 130 (AFGEVNQLGG…SSISRILRNK (127 aa)) form a DNA-binding region, paired. A PAI subdomain region spans residues 7-63 (EVNQLGGVFVNGRPLPNAIRLRIVELAQLGIRPCDISRQLRVSHGCVSKILARYNET). The RED subdomain stretch occupies residues 82 to 130 (TVVKHIRTYKQRDPGIFAWEIRDRLLADGVCDKYNVPSVSSISRILRNK). The tract at residues 168 to 189 (AAAAKVPTPPGVPAIPGSVAMP) is interaction with KDM5B.

In terms of assembly, interacts with KDM5B.

It localises to the nucleus. Its function is as follows. Transcription factor required for normal development of thymus, parathyroid glands, ultimobranchial bodies, teeth, skeletal elements of skull and larynx as well as distal limbs. This is Paired box protein Pax-9 (PAX9) from Saimiri boliviensis boliviensis (Bolivian squirrel monkey).